Here is a 181-residue protein sequence, read N- to C-terminus: Adenine phosphoribosyltransferase (181 aa).

It belongs to the purine/pyrimidine phosphoribosyltransferase family. Homodimer.

Its subcellular location is the cytoplasm. It catalyses the reaction AMP + diphosphate = 5-phospho-alpha-D-ribose 1-diphosphate + adenine. It functions in the pathway purine metabolism; AMP biosynthesis via salvage pathway; AMP from adenine: step 1/1. Catalyzes a salvage reaction resulting in the formation of AMP, that is energically less costly than de novo synthesis. The chain is Adenine phosphoribosyltransferase from Rhodopseudomonas palustris (strain HaA2).